Consider the following 203-residue polypeptide: Small ribosomal subunit protein uS4 (203 aa).

Residues 93 to 153 (QRLDSVVYRL…EKSKNILPIQ (61 aa)) form the S4 RNA-binding domain.

This sequence belongs to the universal ribosomal protein uS4 family. In terms of assembly, part of the 30S ribosomal subunit. Contacts protein S5. The interaction surface between S4 and S5 is involved in control of translational fidelity.

In terms of biological role, one of the primary rRNA binding proteins, it binds directly to 16S rRNA where it nucleates assembly of the body of the 30S subunit. With S5 and S12 plays an important role in translational accuracy. This is Small ribosomal subunit protein uS4 from Leuconostoc mesenteroides subsp. mesenteroides (strain ATCC 8293 / DSM 20343 / BCRC 11652 / CCM 1803 / JCM 6124 / NCDO 523 / NBRC 100496 / NCIMB 8023 / NCTC 12954 / NRRL B-1118 / 37Y).